A 359-amino-acid polypeptide reads, in one-letter code: DNA replication and repair protein RecF (359 aa).

Position 30 to 37 (30 to 37 (GPNAKGKT)) interacts with ATP.

It belongs to the RecF family.

The protein resides in the cytoplasm. In terms of biological role, the RecF protein is involved in DNA metabolism; it is required for DNA replication and normal SOS inducibility. RecF binds preferentially to single-stranded, linear DNA. It also seems to bind ATP. The polypeptide is DNA replication and repair protein RecF (Protochlamydia amoebophila (strain UWE25)).